The chain runs to 147 residues: Hemoglobin subunit beta (147 aa).

Positions 3-147 constitute a Globin domain; that stretch reads HWTAEEKQII…VAHALARKYH (145 aa). Residues His-64 and His-93 each contribute to the heme b site.

As to quaternary structure, heterotetramer of two alpha (or alpha-D) and two beta chains. As to expression, red blood cells.

Involved in oxygen transport from the lung to the various peripheral tissues. The beta chain is a component of adult hemoglobin A and D. This is Hemoglobin subunit beta from Aythya fuligula (Tufted duck).